Reading from the N-terminus, the 217-residue chain is Cytochrome c biogenesis ATP-binding export protein CcmA (217 aa).

Residues 16 to 214 (LVLEQLSCER…AHGQAEVTEG (199 aa)) enclose the ABC transporter domain. 48-55 (GANGAGKT) is an ATP binding site.

It belongs to the ABC transporter superfamily. CcmA exporter (TC 3.A.1.107) family. In terms of assembly, the complex is composed of two ATP-binding proteins (CcmA) and two transmembrane proteins (CcmB).

The protein resides in the cell inner membrane. The catalysed reaction is heme b(in) + ATP + H2O = heme b(out) + ADP + phosphate + H(+). Its function is as follows. Part of the ABC transporter complex CcmAB involved in the biogenesis of c-type cytochromes; once thought to export heme, this seems not to be the case, but its exact role is uncertain. Responsible for energy coupling to the transport system. The protein is Cytochrome c biogenesis ATP-binding export protein CcmA of Alcanivorax borkumensis (strain ATCC 700651 / DSM 11573 / NCIMB 13689 / SK2).